The chain runs to 367 residues: Histidinol-phosphate aminotransferase (367 aa).

Residue K226 is modified to N6-(pyridoxal phosphate)lysine.

Belongs to the class-II pyridoxal-phosphate-dependent aminotransferase family. Histidinol-phosphate aminotransferase subfamily. As to quaternary structure, homodimer. It depends on pyridoxal 5'-phosphate as a cofactor.

It catalyses the reaction L-histidinol phosphate + 2-oxoglutarate = 3-(imidazol-4-yl)-2-oxopropyl phosphate + L-glutamate. It participates in amino-acid biosynthesis; L-histidine biosynthesis; L-histidine from 5-phospho-alpha-D-ribose 1-diphosphate: step 7/9. This Wolinella succinogenes (strain ATCC 29543 / DSM 1740 / CCUG 13145 / JCM 31913 / LMG 7466 / NCTC 11488 / FDC 602W) (Vibrio succinogenes) protein is Histidinol-phosphate aminotransferase.